We begin with the raw amino-acid sequence, 284 residues long: Pantothenate synthetase (284 aa).

ATP is bound at residue 30-37 (MGNLHDGH). H37 (proton donor) is an active-site residue. (R)-pantoate is bound at residue Q61. Residue Q61 participates in beta-alanine binding. Residue 149–152 (GEKD) coordinates ATP. Q155 contacts (R)-pantoate. ATP is bound by residues V178 and 186 to 189 (LSSR).

It belongs to the pantothenate synthetase family. In terms of assembly, homodimer.

It localises to the cytoplasm. It carries out the reaction (R)-pantoate + beta-alanine + ATP = (R)-pantothenate + AMP + diphosphate + H(+). It participates in cofactor biosynthesis; (R)-pantothenate biosynthesis; (R)-pantothenate from (R)-pantoate and beta-alanine: step 1/1. In terms of biological role, catalyzes the condensation of pantoate with beta-alanine in an ATP-dependent reaction via a pantoyl-adenylate intermediate. In Klebsiella pneumoniae subsp. pneumoniae (strain ATCC 700721 / MGH 78578), this protein is Pantothenate synthetase.